Here is a 365-residue protein sequence, read N- to C-terminus: MELLLRFLLLCGVADFTRGLSITTPEQMIEKAKGETAYLPCKFTLGPEDQGPLDIEWLLSPADNQKVDQVIILYSGDKIYDDYYQDLKGRVHFTSNDLKSGDASINVTNLQLSDIGTYQCKVKKAPGVGNKKIQLTVLVKPSGIRCYVDGSEEIGNDFKLKCEPKEGSLPLRYEWQKLSDSQKLPTSWLPEMTSPVISVKNASAEYSGTYTCTVRNRVGSDQCLLRLDVVPPSNRAGTIAGAVIGTLLALVLIALIVFCCHKKRREEKYEKEVHHDIREDVPPPKSRTSTARSYIGSNHSSLGSMSPSNMEGYSKTQYNQVPSEDLERAPQSPTLPPAKVAAPNLSRMGAVPVMIPAQSKDGSIV.

The N-terminal stretch at 1-19 is a signal peptide; that stretch reads MELLLRFLLLCGVADFTRG. Ig-like C2-type domains follow at residues 20 to 136 and 141 to 228; these read LSIT…IQLT and PSGI…LRLD. Residues 20–238 lie on the Extracellular side of the membrane; the sequence is LSITTPEQMI…VVPPSNRAGT (219 aa). Cystine bridges form between Cys41-Cys120, Cys146-Cys223, and Cys162-Cys212. N-linked (GlcNAc...) asparagine glycosylation is present at Asn106. The chain crosses the membrane as a helical span at residues 239–259; it reads IAGAVIGTLLALVLIALIVFC. 2 S-palmitoyl cysteine lipidation sites follow: Cys259 and Cys260. The Cytoplasmic portion of the chain corresponds to 260–365; sequence CHKKRREEKY…PAQSKDGSIV (106 aa). Over residues 269-282 the composition is skewed to basic and acidic residues; sequence YEKEVHHDIREDVP. The segment at 269 to 343 is disordered; that stretch reads YEKEVHHDIR…TLPPAKVAAP (75 aa). Polar residues predominate over residues 286 to 322; that stretch reads SRTSTARSYIGSNHSSLGSMSPSNMEGYSKTQYNQVP. Phosphoserine occurs at positions 297, 304, 306, 323, 332, and 363. Positions 360–365 match the PDZ-binding motif; the sequence is KDGSIV.

Monomer. May form homodimers. Interacts with LNX, MAGI1, DLG4, PRKCABP, TJP1 and CTNNB1. Interacts with MPDZ; recruits MPDZ to intercellular contact sites. Interacts with JAML (homodimeric form). N-glycosylated. In terms of processing, palmitoylated on Cys-259 and/or Cys-260; required for proper localization to the plasma membrane.

The protein resides in the cell membrane. It is found in the basolateral cell membrane. It localises to the cell junction. The protein localises to the tight junction. Its subcellular location is the adherens junction. Component of the epithelial apical junction complex that may function as a homophilic cell adhesion molecule and is essential for tight junction integrity. Also involved in transepithelial migration of leukocytes through adhesive interactions with JAML a transmembrane protein of the plasma membrane of leukocytes. The interaction between both receptors also mediates the activation of gamma-delta T-cells, a subpopulation of T-cells residing in epithelia and involved in tissue homeostasis and repair. Upon epithelial CXADR-binding, JAML induces downstream cell signaling events in gamma-delta T-cells through PI3-kinase and MAP kinases. It results in proliferation and production of cytokines and growth factors by T-cells that in turn stimulate epithelial tissues repair. This chain is Coxsackievirus and adenovirus receptor homolog (CXADR), found in Bos taurus (Bovine).